The following is a 140-amino-acid chain: Probable glycine cleavage system H protein 3 (140 aa).

The Lipoyl-binding domain maps to 29-110; sequence VVSIGVTDLG…PYDSWIVKIR (82 aa). At Lys-70 the chain carries N6-lipoyllysine.

The protein belongs to the GcvH family. The glycine cleavage system is composed of four proteins: P, T, L and H. The cofactor is (R)-lipoate.

Functionally, the glycine cleavage system catalyzes the degradation of glycine. The H protein shuttles the methylamine group of glycine from the P protein to the T protein. This chain is Probable glycine cleavage system H protein 3, found in Saccharolobus solfataricus (strain ATCC 35092 / DSM 1617 / JCM 11322 / P2) (Sulfolobus solfataricus).